Reading from the N-terminus, the 65-residue chain is Photosystem II reaction center protein Z (65 aa).

The next 2 membrane-spanning stretches (helical) occupy residues alanine 8 to alanine 28 and tyrosine 41 to valine 61.

The protein belongs to the PsbZ family. As to quaternary structure, PSII is composed of 1 copy each of membrane proteins PsbA, PsbB, PsbC, PsbD, PsbE, PsbF, PsbH, PsbI, PsbJ, PsbK, PsbL, PsbM, PsbT, PsbX, PsbY, PsbZ, Psb30/Ycf12, at least 3 peripheral proteins of the oxygen-evolving complex and a large number of cofactors. It forms dimeric complexes.

The protein resides in the plastid. The protein localises to the cyanelle thylakoid membrane. In terms of biological role, may control the interaction of photosystem II (PSII) cores with the light-harvesting antenna, regulates electron flow through the 2 photosystem reaction centers. PSII is a light-driven water plastoquinone oxidoreductase, using light energy to abstract electrons from H(2)O, generating a proton gradient subsequently used for ATP formation. In Cyanophora paradoxa, this protein is Photosystem II reaction center protein Z.